The primary structure comprises 241 residues: Histone H1-II (241 aa).

Basic and acidic residues predominate over residues 1 to 10 (MASDAPEVKA). Disordered stretches follow at residues 1–27 (MASD…THPP) and 89–241 (NSYK…AKKA). The segment covering 11-20 (PKAKTQKKPK) has biased composition (basic residues). An H15 domain is found at 24–95 (THPPYIQMVT…KVKNSYKLSD (72 aa)). The segment covering 99 to 111 (SKAKAAAKPKAAP) has biased composition (basic residues). Repeat copies occupy residues 111-116 (PKKAAA), 117-122 (PKKAAA), and 123-128 (PKKAKA). The tract at residues 111–217 (PKKAAAPKKA…KAATPKKAKA (107 aa)) is 8 X 6 AA repeats of P-K-K-A-[AK]-A. A compositionally biased stretch (basic and acidic residues) spans 129 to 155 (PKKEGEKKAVKPKSEKKAAKPKTEKKP). 2 stretches are compositionally biased toward basic residues: residues 156 to 184 (KAAK…KATP) and 194 to 241 (AAPK…AKKA). A DNA-binding region spans residues 183–186 (TPKK). 5 tandem repeats follow at residues 184 to 189 (PKKAAA), 190 to 195 (PKKAAA), 196 to 201 (PKKAKA), 204 to 209 (PKKAKA), and 212 to 217 (PKKAKA). 2 consecutive DNA-binding regions follow at residues 203 to 206 (TPKK) and 211 to 214 (TPKK).

This sequence belongs to the histone H1/H5 family.

The protein localises to the nucleus. It is found in the chromosome. Its function is as follows. Histones H1 are necessary for the condensation of nucleosome chains into higher-order structures. The protein is Histone H1-II (H1-II) of Volvox carteri (Green alga).